The chain runs to 174 residues: NADPH-dependent 7-cyano-7-deazaguanine reductase (174 aa).

The active-site Thioimide intermediate is the Cys-72. The active-site Proton donor is Asp-79. Residues 94 to 96 and 113 to 114 contribute to the substrate site; these read VES and HE.

The protein belongs to the GTP cyclohydrolase I family. QueF type 1 subfamily.

The protein localises to the cytoplasm. The catalysed reaction is 7-aminomethyl-7-carbaguanine + 2 NADP(+) = 7-cyano-7-deazaguanine + 2 NADPH + 3 H(+). Its pathway is tRNA modification; tRNA-queuosine biosynthesis. Functionally, catalyzes the NADPH-dependent reduction of 7-cyano-7-deazaguanine (preQ0) to 7-aminomethyl-7-deazaguanine (preQ1). The protein is NADPH-dependent 7-cyano-7-deazaguanine reductase of Synechococcus elongatus (strain ATCC 33912 / PCC 7942 / FACHB-805) (Anacystis nidulans R2).